Reading from the N-terminus, the 700-residue chain is pH-response regulator protein palI/prr-5 (700 aa).

Residues 1 to 8 (MLRPATPL) are Cytoplasmic-facing. Residues 9-29 (AVLLFAAFGLLTLATISTPII) form a helical membrane-spanning segment. Residues 30–90 (KQIPLSSFEI…PRATRSTLSS (61 aa)) lie on the Extracellular side of the membrane. A helical transmembrane segment spans residues 91–111 (ILIVHPVAALITLINFVLAIV). At 112–123 (AHFHSPSHSARY) the chain is on the cytoplasmic side. The chain crosses the membrane as a helical span at residues 124–144 (LLILFIVSFVDFIVCLLCFLV). The Extracellular portion of the chain corresponds to 145–152 (DVLLFIPH). The chain crosses the membrane as a helical span at residues 153-173 (LSWGSYIVVAATILVAFCGLV). Residues 174 to 700 (TCAMRRTLVN…GNMPRAAGPR (527 aa)) lie on the Cytoplasmic side of the membrane. Disordered stretches follow at residues 226-491 (SGAN…GIRD), 507-560 (VPDP…PISE), and 573-700 (DVDP…AGPR). The segment covering 234–252 (KLPEFTTFEKKDDRSEERI) has biased composition (basic and acidic residues). The span at 320–378 (GRGGMPPGGYRGRGGFPGPGRGGGPPQNGRGGYGPPGRGRGGYGPPPRGYGGPGPRGGR) shows a compositional bias: gly residues. A compositionally biased stretch (polar residues) spans 414-424 (SPYANRQQSPG). Polar residues-rich tracts occupy residues 593-603 (SMQSPPASNSY) and 615-637 (ESEN…NSAN). A compositionally biased stretch (low complexity) spans 657 to 671 (VVPRRPVNRPGAGPA).

It belongs to the palI/RIM9 family.

It localises to the cell membrane. In terms of biological role, required for the proteolytic cleavage of the transcription factor pacc-1 in response to alkaline ambient pH. In Neurospora crassa (strain ATCC 24698 / 74-OR23-1A / CBS 708.71 / DSM 1257 / FGSC 987), this protein is pH-response regulator protein palI/prr-5 (prr-5).